Here is a 239-residue protein sequence, read N- to C-terminus: MQLMQVQNLSKCYRNGDGVEHLSFSIQRGEIVALLGPNGAGKTTTIRCLTGLYKPDKGDILIEGSPPGDINVQKKVALIPDQPYLYPALTAAEHIQFRARGYHPGKKDVKERVYHALKEVHLEEKANQLCGQLSRGQKQRVVLAGAIVQDALLYILDEPTVGLDIPSKQWLSNWLKTKTDQGCSAFVSTHSLEFVIETADRVILIRDGKLMQDLYVPQFEEQAEWRKEVIRLLGEWSDE.

The ABC transporter domain maps to 4–232 (MQVQNLSKCY…AEWRKEVIRL (229 aa)). An ATP-binding site is contributed by 36-43 (GPNGAGKT).

This sequence belongs to the ABC transporter superfamily. SkfA peptide export (TC 3.A.1.128.1) family.

Its subcellular location is the cell membrane. It carries out the reaction sulfate(out) + ATP + H2O = sulfate(in) + ADP + phosphate + H(+). The catalysed reaction is thiosulfate(out) + ATP + H2O = thiosulfate(in) + ADP + phosphate + H(+). Functionally, probably part of the ABC transporter SkfEF involved in the export of the bacteriocin SKF. Probably responsible for energy coupling to the transport system. This chain is SkfA peptide export ATP-binding protein SkfE, found in Bacillus subtilis (strain 168).